A 133-amino-acid chain; its full sequence is Vascular endothelial growth factor homolog (133 aa).

An N-terminal signal peptide occupies residues 1-20 (MKLLVGILVAVCLHQYLLNA). 3 cysteine pairs are disulfide-bonded: Cys36/Cys78, Cys67/Cys112, and Cys71/Cys114. Asn85 carries N-linked (GlcNAc...) asparagine; by host glycosylation.

The protein belongs to the PDGF/VEGF growth factor family. Homodimer; disulfide-linked.

It localises to the secreted. Its function is as follows. Induces endothelial proliferation. The sequence is that of Vascular endothelial growth factor homolog from Orf virus (strain NZ2) (OV NZ-2).